A 122-amino-acid chain; its full sequence is Large ribosomal subunit protein uL14 (122 aa).

Belongs to the universal ribosomal protein uL14 family. In terms of assembly, part of the 50S ribosomal subunit. Forms a cluster with proteins L3 and L19. In the 70S ribosome, L14 and L19 interact and together make contacts with the 16S rRNA in bridges B5 and B8.

Functionally, binds to 23S rRNA. Forms part of two intersubunit bridges in the 70S ribosome. The sequence is that of Large ribosomal subunit protein uL14 from Cereibacter sphaeroides (strain ATCC 17029 / ATH 2.4.9) (Rhodobacter sphaeroides).